The sequence spans 134 residues: Cytochrome b5 isoform B (134 aa).

Residues Ala-5–Asp-81 form the Cytochrome b5 heme-binding domain. Residues His-40 and His-64 each contribute to the heme site. Residues Phe-107–Ile-127 form a helical membrane-spanning segment.

It belongs to the cytochrome b5 family. In terms of assembly, interacts with CER1, FAH1, FAH2 and BI-1.

It is found in the endoplasmic reticulum membrane. In terms of biological role, membrane bound hemoprotein which function as an electron carrier for several membrane bound oxygenases, including fatty acid desaturases. This Arabidopsis thaliana (Mouse-ear cress) protein is Cytochrome b5 isoform B.